Reading from the N-terminus, the 151-residue chain is Small ribosomal subunit protein uS15y (151 aa).

This sequence belongs to the universal ribosomal protein uS15 family.

This is Small ribosomal subunit protein uS15y (RPS13B) from Arabidopsis thaliana (Mouse-ear cress).